The following is a 305-amino-acid chain: Glycine--tRNA ligase alpha subunit (305 aa).

It belongs to the class-II aminoacyl-tRNA synthetase family. As to quaternary structure, tetramer of two alpha and two beta subunits.

The protein resides in the cytoplasm. The enzyme catalyses tRNA(Gly) + glycine + ATP = glycyl-tRNA(Gly) + AMP + diphosphate. The polypeptide is Glycine--tRNA ligase alpha subunit (Heliobacterium modesticaldum (strain ATCC 51547 / Ice1)).